Reading from the N-terminus, the 160-residue chain is Probable chemoreceptor glutamine deamidase CheD 1 (160 aa).

It belongs to the CheD family.

It carries out the reaction L-glutaminyl-[protein] + H2O = L-glutamyl-[protein] + NH4(+). Its function is as follows. Probably deamidates glutamine residues to glutamate on methyl-accepting chemotaxis receptors (MCPs), playing an important role in chemotaxis. The protein is Probable chemoreceptor glutamine deamidase CheD 1 of Syntrophus aciditrophicus (strain SB).